The primary structure comprises 101 residues: Feather keratin Cos2-2 (101 aa).

N-acetylserine is present on Ser-2.

Belongs to the avian keratin family. As to quaternary structure, the avian keratins (F-ker, S-ker, C-ker and B-ker) are a complex mixture of very similar polypeptides.

The chain is Feather keratin Cos2-2 from Columba livia (Rock dove).